Consider the following 340-residue polypeptide: Glycerol-3-phosphate dehydrogenase [NAD(P)+] (340 aa).

S13, W14, and K108 together coordinate NADPH. K108, G139, and S141 together coordinate sn-glycerol 3-phosphate. A143 provides a ligand contact to NADPH. Sn-glycerol 3-phosphate is bound by residues K194, D247, S257, R258, and N259. Catalysis depends on K194, which acts as the Proton acceptor. Residue R258 participates in NADPH binding. NADPH contacts are provided by V282 and E284.

Belongs to the NAD-dependent glycerol-3-phosphate dehydrogenase family.

The protein localises to the cytoplasm. The enzyme catalyses sn-glycerol 3-phosphate + NAD(+) = dihydroxyacetone phosphate + NADH + H(+). It catalyses the reaction sn-glycerol 3-phosphate + NADP(+) = dihydroxyacetone phosphate + NADPH + H(+). The protein operates within membrane lipid metabolism; glycerophospholipid metabolism. Catalyzes the reduction of the glycolytic intermediate dihydroxyacetone phosphate (DHAP) to sn-glycerol 3-phosphate (G3P), the key precursor for phospholipid synthesis. In Streptococcus thermophilus (strain CNRZ 1066), this protein is Glycerol-3-phosphate dehydrogenase [NAD(P)+].